The primary structure comprises 411 residues: Dual specificity protein phosphatase Mpk3 (411 aa).

The 128-residue stretch at 22–149 (DSKDLILLDC…FRQAFPEWCE (128 aa)) folds into the Rhodanese domain. Low complexity predominate over residues 184 to 197 (DSACSSSAESSDCE). Residues 184–209 (DSACSSSAESSDCESSSHHHHHHSHH) are disordered. Residues 214–358 (APVEIIPGLL…LLSFESQLRL (145 aa)) enclose the Tyrosine-protein phosphatase domain. The active-site Phosphocysteine intermediate is the Cys302.

It belongs to the protein-tyrosine phosphatase family. Non-receptor class dual specificity subfamily. Interacts (via N-terminal region) with phosphorylated rl. As to expression, ubiquitous expression in eye and wing imaginal disks. Enriched in ovary.

It is found in the cytoplasm. The enzyme catalyses O-phospho-L-tyrosyl-[protein] + H2O = L-tyrosyl-[protein] + phosphate. It catalyses the reaction O-phospho-L-seryl-[protein] + H2O = L-seryl-[protein] + phosphate. The catalysed reaction is O-phospho-L-threonyl-[protein] + H2O = L-threonyl-[protein] + phosphate. Its activity is regulated as follows. Activity abolished by tyrosine phosphatase inhibitor sodium vanadate. Activated by rl. Functionally, negatively regulates the activity of members of the MAP kinase family in response to changes in the cellular environment. Has a specificity for the ERK family. Acts as a negative regulator in a variety of developmental processes including cell differentiation and proliferation controlled by the Ras/ERK pathway. Suppresses the photoreceptor cell differentiation and wing vein formation. Required for proper oogenesis and early embryogenesis. Functions autonomously in a subset of photoreceptor progenitor cells in eye imaginal disks. Also appears to be required in surrounding non-neuronal cells for ommatidial patterning and photoreceptor differentiation. Plays a role in the maintenance of epithelial integrity during tracheal development. This Drosophila melanogaster (Fruit fly) protein is Dual specificity protein phosphatase Mpk3 (Mkp3).